The following is a 331-amino-acid chain: UDP-glucose 4-epimerase (331 aa).

Residues 11 to 12 (YI), 31 to 36 (DNLITG), 51 to 52 (DI), 73 to 77 (FAAFS), Asn-92, Thr-117, Tyr-141, Lys-145, and Phe-169 each bind NAD(+). Positions 117 and 141 each coordinate substrate. The active-site Proton acceptor is the Tyr-141. Substrate is bound by residues Asn-170, 189-190 (HI), 206-208 (QIY), Arg-221, and 282-285 (RAGD).

This sequence belongs to the NAD(P)-dependent epimerase/dehydratase family. As to quaternary structure, homodimer. NAD(+) serves as cofactor.

The catalysed reaction is UDP-alpha-D-glucose = UDP-alpha-D-galactose. It functions in the pathway carbohydrate metabolism; galactose metabolism. The protein is UDP-glucose 4-epimerase (galE) of Lacticaseibacillus casei (Lactobacillus casei).